We begin with the raw amino-acid sequence, 248 residues long: 3-deoxy-manno-octulosonate cytidylyltransferase (248 aa).

The protein belongs to the KdsB family.

It localises to the cytoplasm. The catalysed reaction is 3-deoxy-alpha-D-manno-oct-2-ulosonate + CTP = CMP-3-deoxy-beta-D-manno-octulosonate + diphosphate. The protein operates within nucleotide-sugar biosynthesis; CMP-3-deoxy-D-manno-octulosonate biosynthesis; CMP-3-deoxy-D-manno-octulosonate from 3-deoxy-D-manno-octulosonate and CTP: step 1/1. It functions in the pathway bacterial outer membrane biogenesis; lipopolysaccharide biosynthesis. Functionally, activates KDO (a required 8-carbon sugar) for incorporation into bacterial lipopolysaccharide in Gram-negative bacteria. This is 3-deoxy-manno-octulosonate cytidylyltransferase from Shigella boydii serotype 18 (strain CDC 3083-94 / BS512).